Here is a 663-residue protein sequence, read N- to C-terminus: UvrABC system protein B (663 aa).

The span at 1 to 10 (MIDKRDDKPF) shows a compositional bias: basic and acidic residues. Residues 1–23 (MIDKRDDKPFKLKSKYKPSGDQP) are disordered. Residues 31–271 (DNIEGGEKAQ…EQSIAKIQAE (241 aa)) enclose the Helicase ATP-binding domain. 44–51 (GATGTGKT) contacts ATP. A Beta-hairpin motif is present at residues 97–120 (YYDYYQPEAYVPSSDTYIEKDSSV). The Helicase C-terminal domain maps to 435–601 (QIDDLLGEIN…TIKKDIRGLI (167 aa)). The UVR domain maps to 627–662 (KEAINALQKQMQEAAELLDFELAAQMRDLILELKLM).

This sequence belongs to the UvrB family. In terms of assembly, forms a heterotetramer with UvrA during the search for lesions. Interacts with UvrC in an incision complex.

It localises to the cytoplasm. Its function is as follows. The UvrABC repair system catalyzes the recognition and processing of DNA lesions. A damage recognition complex composed of 2 UvrA and 2 UvrB subunits scans DNA for abnormalities. Upon binding of the UvrA(2)B(2) complex to a putative damaged site, the DNA wraps around one UvrB monomer. DNA wrap is dependent on ATP binding by UvrB and probably causes local melting of the DNA helix, facilitating insertion of UvrB beta-hairpin between the DNA strands. Then UvrB probes one DNA strand for the presence of a lesion. If a lesion is found the UvrA subunits dissociate and the UvrB-DNA preincision complex is formed. This complex is subsequently bound by UvrC and the second UvrB is released. If no lesion is found, the DNA wraps around the other UvrB subunit that will check the other stand for damage. This chain is UvrABC system protein B, found in Streptococcus pyogenes serotype M5 (strain Manfredo).